A 339-amino-acid polypeptide reads, in one-letter code: MCNLLNIEKDPIRVLITGAAGNIGYAIAPMIARGIMLGPDQPMILHLLDIEPASSSLEAVKMELQDSAFPLLKGVIATTNVVEACKDVNIVIMIGGFPRIAGMERKDVMSKNVVIYKAQASALERYASDDCKVLVVANPANTNALILKEFAPSIPEENITCLTRLDHNRALAQLADKLSVPVSSVKNVIVWGNHSSTQYPDTNHATVSTKTGDRPLKELVTDHNWLKNEFIVEVQQRGAAVLRARKQSSAFSAAGAACDHIRDWFLGTPKGTWVSMGVCSDGSYGIPPGLVYSFPVICEKGSWKIVQGLSIDEFSREKMDDSARELAEEKDLAYSCLNV.

NAD(+) contacts are provided by residues 22 to 23 (NI), Asp49, and Gly96. Residue Arg105 participates in oxaloacetate binding. The NAD(+) site is built by Gln119 and Asn138. The oxaloacetate site is built by Asn138, Arg169, His194, and Ser249. Residue His194 is the Proton acceptor of the active site.

It belongs to the LDH/MDH superfamily. MDH type 2 family. Expressed in rosette leaves at low levels.

Its subcellular location is the cytoplasm. The enzyme catalyses (S)-malate + NAD(+) = oxaloacetate + NADH + H(+). Functionally, catalyzes a reversible NAD-dependent dehydrogenase reaction involved in central metabolism and redox homeostasis between organelle compartments. This is Malate dehydrogenase 3, cytoplasmic from Arabidopsis thaliana (Mouse-ear cress).